Consider the following 476-residue polypeptide: tRNA(Ile)-lysidine synthase (476 aa).

30–35 (SGGPDS) is an ATP binding site.

It belongs to the tRNA(Ile)-lysidine synthase family.

It localises to the cytoplasm. The enzyme catalyses cytidine(34) in tRNA(Ile2) + L-lysine + ATP = lysidine(34) in tRNA(Ile2) + AMP + diphosphate + H(+). In terms of biological role, ligates lysine onto the cytidine present at position 34 of the AUA codon-specific tRNA(Ile) that contains the anticodon CAU, in an ATP-dependent manner. Cytidine is converted to lysidine, thus changing the amino acid specificity of the tRNA from methionine to isoleucine. The polypeptide is tRNA(Ile)-lysidine synthase (Bacillus cereus (strain ZK / E33L)).